The primary structure comprises 281 residues: DSC E3 ubiquitin ligase complex subunit 4 (281 aa).

Helical transmembrane passes span 22-42 (LCYA…LLLL), 62-82 (LPLF…RMFF), 84-104 (LPTA…INFI), and 115-135 (FITS…ILIA). The segment covering 145–154 (HIQASQSGLS) has biased composition (polar residues). Disordered stretches follow at residues 145-183 (HIQA…EDLQ) and 256-281 (NTNS…TNPI). Acidic residues predominate over residues 157 to 167 (DGDEEPSDLIT). The span at 168–183 (EDSRDTQQGQRQEDLQ) shows a compositional bias: basic and acidic residues.

In terms of assembly, component of the DSC E3 ubiquitin ligase complex composed of dsc1, dsc2, dsc3 and dsc4.

It is found in the endoplasmic reticulum membrane. The protein resides in the golgi apparatus membrane. Its pathway is protein modification; protein ubiquitination. Component of the DSC E3 ubiquitin ligase complex which is required for the sre1 transcriptional activator proteolytic cleavage to release the soluble transcription factor from the membrane in low oxygen or sterol conditions. The complex also plays an important role in the multivesicular body (MVB) pathway and functions in a post-endoplasmic reticulum pathway for protein degradation. The protein is DSC E3 ubiquitin ligase complex subunit 4 (dsc4) of Schizosaccharomyces pombe (strain 972 / ATCC 24843) (Fission yeast).